The following is a 122-amino-acid chain: HetP-like commitment protein Alr3234 (122 aa).

It belongs to the HetP family. In bacterial two-hybrid assays interacts robustly with itself, Asl1930, Alr2902 and HetR and weakly with HetP.

Its function is as follows. Delays heterocyst differentiation and commitment when nitrogen is limiting. Interplay between the 4 HetP paralogs controls the timing of commitment to heterocyst formation and its duration. Epistatic analysis show that the 3 paralogs act upstream of hetP to delay commitment (asl1930, alr3234) or inhibit development (alr2902). Asl1930 and Alr3234 must also attenuate the activity of Alr2902. Ectopic expression does not complement a hetP deletion. The protein is HetP-like commitment protein Alr3234 of Nostoc sp. (strain PCC 7120 / SAG 25.82 / UTEX 2576).